Reading from the N-terminus, the 297-residue chain is UDP-3-O-acyl-N-acetylglucosamine deacetylase (297 aa).

Positions 77, 236, and 240 each coordinate Zn(2+). Residue His-263 is the Proton donor of the active site.

Belongs to the LpxC family. Requires Zn(2+) as cofactor.

The catalysed reaction is a UDP-3-O-[(3R)-3-hydroxyacyl]-N-acetyl-alpha-D-glucosamine + H2O = a UDP-3-O-[(3R)-3-hydroxyacyl]-alpha-D-glucosamine + acetate. Its pathway is glycolipid biosynthesis; lipid IV(A) biosynthesis; lipid IV(A) from (3R)-3-hydroxytetradecanoyl-[acyl-carrier-protein] and UDP-N-acetyl-alpha-D-glucosamine: step 2/6. Catalyzes the hydrolysis of UDP-3-O-myristoyl-N-acetylglucosamine to form UDP-3-O-myristoylglucosamine and acetate, the committed step in lipid A biosynthesis. This is UDP-3-O-acyl-N-acetylglucosamine deacetylase from Psychrobacter sp. (strain PRwf-1).